The chain runs to 197 residues: Phosphoheptose isomerase (197 aa).

One can recognise an SIS domain in the interval 36–197 (MVNALLNEGK…IDSQLFGSEE (162 aa)). 51–53 (NGG) contributes to the substrate binding site. Positions 60 and 64 each coordinate Zn(2+). Residues Glu64, 93 to 94 (ND), 119 to 121 (STS), Ser124, and Gln174 each bind substrate. Positions 174 and 182 each coordinate Zn(2+).

This sequence belongs to the SIS family. GmhA subfamily. Homotetramer. Zn(2+) is required as a cofactor.

It localises to the cytoplasm. It carries out the reaction 2 D-sedoheptulose 7-phosphate = D-glycero-alpha-D-manno-heptose 7-phosphate + D-glycero-beta-D-manno-heptose 7-phosphate. It participates in carbohydrate biosynthesis; D-glycero-D-manno-heptose 7-phosphate biosynthesis; D-glycero-alpha-D-manno-heptose 7-phosphate and D-glycero-beta-D-manno-heptose 7-phosphate from sedoheptulose 7-phosphate: step 1/1. Its function is as follows. Catalyzes the isomerization of sedoheptulose 7-phosphate in D-glycero-D-manno-heptose 7-phosphate. The polypeptide is Phosphoheptose isomerase (Pseudomonas putida (strain GB-1)).